Reading from the N-terminus, the 958-residue chain is UvrABC system protein A (958 aa).

The ABC transporter 1 domain occupies 1 to 232 (MQSKSIKIQG…IETALKLGEG (232 aa)). 33–40 (GLSGSGKS) is a binding site for ATP. The segment at 252–279 (CPICGFSIGELEPRLFSFNSPFGACPSC) adopts a C4-type zinc-finger fold. 2 consecutive ABC transporter domains span residues 315–593 (QYYP…KYLS) and 604–935 (RRKP…GKYL). 639–646 (GVSGSGKS) is an ATP binding site. Residues 738-764 (CEACRGDGILKIEMHFLPDVYVPCEVC) form a C4-type zinc finger.

The protein belongs to the ABC transporter superfamily. UvrA family. Forms a heterotetramer with UvrB during the search for lesions.

It is found in the cytoplasm. Its function is as follows. The UvrABC repair system catalyzes the recognition and processing of DNA lesions. UvrA is an ATPase and a DNA-binding protein. A damage recognition complex composed of 2 UvrA and 2 UvrB subunits scans DNA for abnormalities. When the presence of a lesion has been verified by UvrB, the UvrA molecules dissociate. The sequence is that of UvrABC system protein A from Oceanobacillus iheyensis (strain DSM 14371 / CIP 107618 / JCM 11309 / KCTC 3954 / HTE831).